Consider the following 258-residue polypeptide: 5'-nucleotidase SurE (258 aa).

The a divalent metal cation site is built by D9, D10, S42, and N95.

This sequence belongs to the SurE nucleotidase family. Requires a divalent metal cation as cofactor.

It localises to the cytoplasm. It catalyses the reaction a ribonucleoside 5'-phosphate + H2O = a ribonucleoside + phosphate. In terms of biological role, nucleotidase that shows phosphatase activity on nucleoside 5'-monophosphates. This is 5'-nucleotidase SurE from Campylobacter concisus (strain 13826).